Here is a 1342-residue protein sequence, read N- to C-terminus: DNA-directed RNA polymerase subunit beta (1342 aa).

Lys-1022 and Lys-1200 each carry N6-acetyllysine.

It belongs to the RNA polymerase beta chain family. The RNAP catalytic core consists of 2 alpha, 1 beta, 1 beta' and 1 omega subunit. When a sigma factor is associated with the core the holoenzyme is formed, which can initiate transcription.

The enzyme catalyses RNA(n) + a ribonucleoside 5'-triphosphate = RNA(n+1) + diphosphate. DNA-dependent RNA polymerase catalyzes the transcription of DNA into RNA using the four ribonucleoside triphosphates as substrates. The sequence is that of DNA-directed RNA polymerase subunit beta from Shigella flexneri serotype 5b (strain 8401).